Consider the following 819-residue polypeptide: Hypoxia-inducible factor 1-alpha (819 aa).

The tract at residues 1–31 (MEGAAGGEEKKNRMSSERRKEKSRDAARSRR) is disordered. An interaction with TSGA10 region spans residues 1–402 (MEGAAGGEEK…KEPDALTLLA (402 aa)). The segment covering 7–31 (GEEKKNRMSSERRKEKSRDAARSRR) has biased composition (basic and acidic residues). Positions 18–71 (RRKEKSRDAARSRRSKESEVFYELAHQLPLPHNVSSHLDKASVMRLTISYLRVR) constitute a bHLH domain. The segment at 22 to 31 (KSRDAARSRR) is DNA-binding. The region spanning 86 to 159 (KAQMNCFYLK…THRNGPIKKG (74 aa)) is the PAS 1 domain. The interval 171 to 192 (RMKCTLTSRGRTMNIKSATWKV) is required for heterodimer formation with ARNT. The 71-residue stretch at 229-299 (PHPSNIEIPL…KTHHDMFTKG (71 aa)) folds into the PAS 2 domain. The residue at position 248 (S248) is a Phosphoserine; by CK1. In terms of domain architecture, PAC spans 303-346 (TGQYRMLAKRGGYVWVETQATVIYNTKNSQPQCIVCVNYVVSGI). Positions 402–599 (APAAGDTIIS…NPPSVSTAFQ (198 aa)) are ODD. P403 carries the post-translational modification 4-hydroxyproline. The segment covering 495-518 (IQDQPASPSDGSTRQSSPEPNSPS) has biased composition (polar residues). Residues 495–521 (IQDQPASPSDGSTRQSSPEPNSPSEYC) are disordered. Residues 532–576 (FKLELVEKLFAEDTEAKNPFSTQDTDLDLEMLAPYIPMDDDFQLR) form an NTAD region. An N6-acetyllysine; alternate modification is found at K533. Residue K533 forms a Glycyl lysine isopeptide (Lys-Gly) (interchain with G-Cter in ubiquitin); alternate linkage. Residues K539 and K548 each participate in a glycyl lysine isopeptide (Lys-Gly) (interchain with G-Cter in ubiquitin) cross-link. S552 carries the phosphoserine; by GSK3-beta modification. A Phosphothreonine; by GSK3-beta modification is found at T556. At P565 the chain carries 4-hydroxyproline. A Phosphoserine; by PLK3 modification is found at S577. The tract at residues 577 to 778 (SFDQLSPLES…SDLACRLLGQ (202 aa)) is ID. The disordered stretch occupies residues 581–685 (LSPLESSSPN…SHPRSPNVLS (105 aa)). Over residues 582–613 (SPLESSSPNPPSVSTAFQQTQLQEPTITTTTT) the composition is skewed to low complexity. Over residues 614–628 (EELKTVTKDSTEDIK) the composition is skewed to basic and acidic residues. A compositionally biased stretch (low complexity) spans 632–655 (TSPSSTHTPKETTTATTSSPYSGT). S650 is modified (phosphoserine; by PLK3). K702 is subject to N6-acetyllysine. A Nuclear localization signal motif is present at residues 711–717 (RKRKMEH). Residues 779-819 (SMDGSGLPQLTSYDCEVNAPIQGSRNLLQGEELLRALDQVN) form a CTAD region. Position 793 is an S-nitrosocysteine (C793). N796 carries the post-translational modification (3S)-3-hydroxyasparagine.

Interacts with the ARNT; forms a heterodimer that binds core DNA sequence 5'-TACGTG-3' within the hypoxia response element (HRE) of target gene promoters. Interacts with COPS5; the interaction increases the transcriptional activity of HIF1A through increased stability. Interacts with EP300 (via TAZ-type 1 domains); the interaction is stimulated in response to hypoxia and inhibited by CITED2. Interacts with CREBBP (via TAZ-type 1 domains). Interacts with NCOA1, NCOA2, APEX1 and HSP90. Interacts (hydroxylated within the ODD domain) with VHLL (via beta domain); the interaction, leads to polyubiquitination and subsequent HIF1A proteasomal degradation. During hypoxia, sumoylated HIF1A also binds VHL; the interaction promotes the ubiquitination of HIF1A. Interacts with SENP1; the interaction desumoylates HIF1A resulting in stabilization and activation of transcription. Interacts (via the ODD domain) with NAA10; the interaction appears not to acetylate HIF1A nor have any affect on protein stability, during hypoxia. Interacts with RWDD3; the interaction enhances HIF1A sumoylation. Interacts with TSGA10. Interacts with HIF3A. Interacts with RORA (via the DNA binding domain); the interaction enhances HIF1A transcription under hypoxia through increasing protein stability. Interaction with PSMA7 inhibits the transactivation activity of HIF1A under both normoxic and hypoxia-mimicking conditions. Interacts with USP20. Interacts with RACK1; promotes HIF1A ubiquitination and proteasome-mediated degradation. Interacts (via N-terminus) with USP19. Interacts with SIRT2. Interacts (deacetylated form) with EGLN1. Interacts with CBFA2T3. Interacts with HSP90AA1 and HSP90AB1. Interacts with DCUN1D1; this interaction increases the interaction between VHL and DCUN1D1. Interacts with HIF1AN. Post-translationally, S-nitrosylation of Cys-793 may be responsible for increased recruitment of p300 coactivator necessary for transcriptional activity of HIF-1 complex. Acetylation of Lys-533 by ARD1 increases interaction with VHL and stimulates subsequent proteasomal degradation. Deacetylation of Lys-702 by SIRT2 increases its interaction with and hydroxylation by EGLN1 thereby inactivating HIF1A activity by inducing its proteasomal degradation. In terms of processing, requires phosphorylation for DNA-binding. Phosphorylation at Ser-248 by CSNK1D/CK1 represses kinase activity and impairs ARNT binding. Phosphorylation by GSK3-beta and PLK3 promote degradation by the proteasome. Post-translationally, the iron and 2-oxoglutarate dependent 3-hydroxylation of asparagine is (S) stereospecific within HIF CTAD domains. Sumoylated; with SUMO1 under hypoxia. Sumoylation is enhanced through interaction with RWDD3. Both sumoylation and desumoylation seem to be involved in the regulation of its stability during hypoxia. Sumoylation can promote either its stabilization or its VHL-dependent degradation by promoting hydroxyproline-independent HIF1A-VHL complex binding, thus leading to HIF1A ubiquitination and proteasomal degradation. Desumoylation by SENP1 increases its stability amd transcriptional activity. There is a disaccord between various publications on the effect of sumoylation and desumoylation on its stability and transcriptional activity. In terms of processing, in normoxia, is hydroxylated on Pro-403 and Pro-565 in the oxygen-dependent degradation domain (ODD) by EGLN1/PHD2 and EGLN2/PHD1. EGLN3/PHD3 has also been shown to hydroxylate Pro-565. The hydroxylated prolines promote interaction with VHL, initiating rapid ubiquitination and subsequent proteasomal degradation. Deubiquitinated by USP20. Under hypoxia, proline hydroxylation is impaired and ubiquitination is attenuated, resulting in stabilization. In normoxia, is hydroxylated on Asn-796 by HIF1AN, thus abrogating interaction with CREBBP and EP300 and preventing transcriptional activation. Repressed by iron ion, via Fe(2+) prolyl hydroxylase (PHD) enzymes-mediated hydroxylation and subsequent proteasomal degradation.

The protein resides in the cytoplasm. The protein localises to the nucleus. It localises to the nucleus speckle. Induced by reactive oxygen species (ROS). Its function is as follows. Functions as a master transcriptional regulator of the adaptive response to hypoxia. Under hypoxic conditions, activates the transcription of over 40 genes, including erythropoietin, glucose transporters, glycolytic enzymes, vascular endothelial growth factor, HILPDA, and other genes whose protein products increase oxygen delivery or facilitate metabolic adaptation to hypoxia. Plays an essential role in embryonic vascularization, tumor angiogenesis and pathophysiology of ischemic disease. Heterodimerizes with ARNT; heterodimer binds to core DNA sequence 5'-TACGTG-3' within the hypoxia response element (HRE) of target gene promoters. Activation requires recruitment of transcriptional coactivators such as CREBBP and EP300. Activity is enhanced by interaction with NCOA1 and/or NCOA2. Interaction with redox regulatory protein APEX1 seems to activate CTAD and potentiates activation by NCOA1 and CREBBP. Involved in the axonal distribution and transport of mitochondria in neurons during hypoxia. The protein is Hypoxia-inducible factor 1-alpha (HIF1A) of Eospalax fontanierii baileyi (Plateau zokor).